The chain runs to 786 residues: Tyrosine-protein kinase Btk (786 aa).

The interval 1–23 is disordered; that stretch reads MMGTKHRNSHVNGSIKSSSSLRS. Residues 14–23 are compositionally biased toward low complexity; it reads SIKSSSSLRS. A PH domain is found at 41-184; it reads DVVKSGSMVK…WIRAIRQVCE (144 aa). Residues 187-223 form a Btk-type zinc finger; the sequence is NTPKSYRYHPGLWSGKKWSCCKGLSRTTFGCRAAAHW. His-195, Cys-206, Cys-207, and Cys-217 together coordinate Zn(2+). Low complexity predominate over residues 226–240; that stretch reads ANNNPSNGSSPAQNS. The interval 226–301 is disordered; that stretch reads ANNNPSNGSS…TPTSLQPQSS (76 aa). Polar residues predominate over residues 241–260; it reads TRSISPNSSTTNSQFSLQHN. Residues 264-290 show a composition bias toward gly residues; the sequence is SLGGGVGGGLGGGGSLGLGGGGGGGGS. The span at 291-301 shows a compositional bias: polar residues; sequence CTPTSLQPQSS. The 61-residue stretch at 342-402 folds into the SH3 domain; that stretch reads HFVKLVVALY…PSNYVKPKAL (61 aa). Residues 410-503 enclose the SH2 domain; it reads WYVGDMSRQR…GLACRLKSSP (94 aa). The Protein kinase domain occupies 526 to 779; the sequence is LMLMEELGSG…FRVLMDQLAL (254 aa). Residues 532–540 and Lys-554 each bind ATP; that span reads LGSGQFGVV. The active-site Proton acceptor is Asp-647. At Tyr-677 the chain carries Phosphotyrosine; by autocatalysis.

It belongs to the protein kinase superfamily. Tyr protein kinase family. TEC subfamily. The cofactor is Zn(2+). Ring canals in the egg chambers and imaginal disks of third-instar larvae.

It carries out the reaction L-tyrosyl-[protein] + ATP = O-phospho-L-tyrosyl-[protein] + ADP + H(+). Required for proper ring canal development. Also required for the development of male genitalia and for adult survival. The protein is Tyrosine-protein kinase Btk of Drosophila melanogaster (Fruit fly).